The primary structure comprises 92 residues: Putative phosphotransferase enzyme IIB component BB_0367 (92 aa).

The 83-residue stretch at 10–92 folds into the PTS EIIB type-1 domain; it reads IKVAEHIVEC…ILYMMNEQKQ (83 aa).

The protein resides in the cytoplasm. Its function is as follows. The phosphoenolpyruvate-dependent sugar phosphotransferase system (PTS), a major carbohydrate active -transport system, catalyzes the phosphorylation of incoming sugar substrates concomitant with their translocation across the cell membrane. The chain is Putative phosphotransferase enzyme IIB component BB_0367 from Borreliella burgdorferi (strain ATCC 35210 / DSM 4680 / CIP 102532 / B31) (Borrelia burgdorferi).